The following is a 145-amino-acid chain: Superoxide dismutase [Mn/Fe] (145 aa).

Residues H10 and H64 each coordinate Fe(3+). H10 and H64 together coordinate Mn(2+).

The protein belongs to the iron/manganese superoxide dismutase family. Requires Mn(2+) as cofactor. The cofactor is Fe(3+).

The catalysed reaction is 2 superoxide + 2 H(+) = H2O2 + O2. Its function is as follows. Destroys superoxide anion radicals which are normally produced within the cells and which are toxic to biological systems. Catalyzes the dismutation of superoxide anion radicals into O2 and H2O2 by successive reduction and oxidation of the transition metal ion at the active site. In Streptococcus parasanguinis, this protein is Superoxide dismutase [Mn/Fe] (sodA).